Consider the following 284-residue polypeptide: P2R1A-PPP2R2A-interacting phosphatase regulator 1 (284 aa).

Disordered regions lie at residues 1–32 (MAQE…SNSA), 112–198 (EESL…PIKR), and 235–284 (AHTL…LPID). Composition is skewed to low complexity over residues 152 to 164 (SPSL…SSGL) and 172 to 184 (PTRR…SQSP). The span at 258–269 (STGSPVSLSDSR) shows a compositional bias: polar residues.

This sequence belongs to the FAM122 family.

The protein localises to the nucleus. It is found in the cytoplasm. Acts as an inhibitor of serine/threonine-protein phosphatase 2A (PP2A) activity. Potentiates ubiquitin-mediated proteasomal degradation of serine/threonine-protein phosphatase 2A catalytic subunit alpha (PPP2CA). Inhibits PP2A-mediated dephosphorylation of WEE1, promoting ubiquitin-mediated proteolysis of WEE1, thereby releasing G2/M checkpoint. The sequence is that of P2R1A-PPP2R2A-interacting phosphatase regulator 1 from Gallus gallus (Chicken).